Reading from the N-terminus, the 297-residue chain is N-acetylmuramic acid 6-phosphate etherase (297 aa).

Residues 55 to 218 (AAAALKAGGR…STGAMVKLGK (164 aa)) form the SIS domain. The Proton donor role is filled by Glu-83. Residue Glu-114 is part of the active site.

The protein belongs to the GCKR-like family. MurNAc-6-P etherase subfamily. As to quaternary structure, homodimer.

The catalysed reaction is N-acetyl-D-muramate 6-phosphate + H2O = N-acetyl-D-glucosamine 6-phosphate + (R)-lactate. The protein operates within amino-sugar metabolism; 1,6-anhydro-N-acetylmuramate degradation. It functions in the pathway amino-sugar metabolism; N-acetylmuramate degradation. Its pathway is cell wall biogenesis; peptidoglycan recycling. Functionally, specifically catalyzes the cleavage of the D-lactyl ether substituent of MurNAc 6-phosphate, producing GlcNAc 6-phosphate and D-lactate. Together with AnmK, is also required for the utilization of anhydro-N-acetylmuramic acid (anhMurNAc) either imported from the medium or derived from its own cell wall murein, and thus plays a role in cell wall recycling. The chain is N-acetylmuramic acid 6-phosphate etherase from Serratia proteamaculans (strain 568).